The following is a 369-amino-acid chain: Gibberellin 3-beta-dioxygenase 2-3 (369 aa).

Residues 205–306 (MTATMHLNWY…RISLGYFLGP (102 aa)) form the Fe2OG dioxygenase domain. Residues histidine 229, aspartate 231, and histidine 287 each coordinate Fe cation. The active site involves arginine 297.

The protein belongs to the iron/ascorbate-dependent oxidoreductase family. GA3OX subfamily. The cofactor is L-ascorbate. Fe cation is required as a cofactor.

It catalyses the reaction gibberellin A20 + 2-oxoglutarate + O2 = gibberellin A1 + succinate + CO2. Converts the inactive gibberellin precursors GA9 and GA20 in the bioactives gibberellins GA4 and GA1. The polypeptide is Gibberellin 3-beta-dioxygenase 2-3 (GA3ox2-3) (Triticum aestivum (Wheat)).